The following is a 63-amino-acid chain: 2-hydroxymuconate tautomerase (63 aa).

Proline 2 acts as the Proton acceptor; via imino nitrogen in catalysis.

The protein belongs to the 4-oxalocrotonate tautomerase family. Homohexamer.

It catalyses the reaction (2Z,4E)-2-hydroxyhexa-2,4-dienedioate = (3E)-2-oxohex-3-enedioate. Its pathway is aromatic compound metabolism; salicylate degradation. Its function is as follows. Catalyzes the ketonization of 2-hydroxymuconate stereoselectively to yield 2-oxo-3-hexenedioate. This Stutzerimonas stutzeri (Pseudomonas stutzeri) protein is 2-hydroxymuconate tautomerase (nahJ).